The following is a 209-amino-acid chain: Dehydration-responsive element-binding protein 1F (209 aa).

The Nuclear localization signal motif lies at Lys14–Arg26. The segment at residues Val29–Ala86 is a DNA-binding region (AP2/ERF). The tract at residues Phe137–Phe157 is disordered.

It belongs to the AP2/ERF transcription factor family. ERF subfamily.

Its subcellular location is the nucleus. In terms of biological role, transcriptional activator that binds specifically to the DNA sequence 5'-[AG]CCGAC-3'. Binding to the C-repeat/DRE element mediates cold or dehydration-inducible transcription. CBF/DREB1 factors play a key role in freezing tolerance and cold acclimation. The polypeptide is Dehydration-responsive element-binding protein 1F (DREB1F) (Arabidopsis thaliana (Mouse-ear cress)).